Here is an 838-residue protein sequence, read N- to C-terminus: Multiphosphoryl transfer protein (838 aa).

The 141-residue stretch at Ala-7–Asp-147 folds into the PTS EIIA type-2 domain. His-67 (tele-phosphohistidine intermediate; for EIIA activity) is an active-site residue. Phosphohistidine; by HPr is present on His-67. In terms of domain architecture, HPr spans Ala-161–Glu-253. His-175 functions as the Pros-phosphohistidine intermediate; for HPr activity in the catalytic mechanism. His-175 carries the phosphohistidine; by EI modification. The PTS EI stretch occupies residues Ala-274–Ala-838. The active-site Tele-phosphohistidine intermediate; for PTS EI activity is the His-460. The residue at position 460 (His-460) is a Phosphohistidine; by autocatalysis. 2 residues coordinate phosphoenolpyruvate: Arg-567 and Arg-603. The Mg(2+) site is built by Glu-697 and Asp-721. Phosphoenolpyruvate contacts are provided by residues Asn-720–Asp-721 and Arg-731. Cys-768 (proton donor) is an active-site residue.

This sequence belongs to the PEP-utilizing enzyme family. It depends on Mg(2+) as a cofactor.

The protein resides in the cytoplasm. It catalyses the reaction L-histidyl-[protein] + phosphoenolpyruvate = N(pros)-phospho-L-histidyl-[protein] + pyruvate. The phosphoenolpyruvate-dependent sugar phosphotransferase system (sugar PTS), a major carbohydrate active transport system, catalyzes the phosphorylation of incoming sugar substrates concomitantly with their translocation across the cell membrane. The enzyme II FruAB PTS system is involved in fructose transport. The sequence is that of Multiphosphoryl transfer protein from Xanthomonas campestris pv. campestris (strain ATCC 33913 / DSM 3586 / NCPPB 528 / LMG 568 / P 25).